A 284-amino-acid chain; its full sequence is Tropomyosin Pen a 1.0102 (284 aa).

Positions M1–Q51 are disordered. Residues M1–E273 are a coiled coil. Basic and acidic residues predominate over residues K12–N45. 7 igE-binding regions span residues V43 to L57, V85 to R105, R133 to F153, E187 to N202, Q247 to Y284, L249 to L260, and K266 to L281.

The protein belongs to the tropomyosin family. In terms of assembly, homodimer.

In terms of biological role, tropomyosin, in association with the troponin complex, plays a central role in the calcium dependent regulation of muscle contraction. The polypeptide is Tropomyosin Pen a 1.0102 (Penaeus aztecus (Brown shrimp)).